The chain runs to 289 residues: Phenylalanine-4-hydroxylase (289 aa).

His-144, His-149, and Glu-189 together coordinate Fe cation.

Belongs to the biopterin-dependent aromatic amino acid hydroxylase family. It depends on Fe(2+) as a cofactor.

It carries out the reaction (6R)-L-erythro-5,6,7,8-tetrahydrobiopterin + L-phenylalanine + O2 = (4aS,6R)-4a-hydroxy-L-erythro-5,6,7,8-tetrahydrobiopterin + L-tyrosine. It functions in the pathway amino-acid degradation; L-phenylalanine degradation; acetoacetate and fumarate from L-phenylalanine: step 1/6. The protein is Phenylalanine-4-hydroxylase (phhA) of Vibrio cholerae serotype O1 (strain ATCC 39315 / El Tor Inaba N16961).